A 185-amino-acid chain; its full sequence is Transcription factor E (185 aa).

The HTH TFE/IIEalpha-type domain occupies 5-88; sequence KNKELLEIAQ…YWRLETKKLP (84 aa).

The protein belongs to the TFE family. As to quaternary structure, monomer. Interaction with RNA polymerase subunits RpoF and RpoE is necessary for Tfe stimulatory transcription activity. Able to interact with Tbp and RNA polymerase in the absence of DNA promoter. Interacts both with the preinitiation and elongation complexes.

Functionally, transcription factor that plays a role in the activation of archaeal genes transcribed by RNA polymerase. Facilitates transcription initiation by enhancing TATA-box recognition by TATA-box-binding protein (Tbp), and transcription factor B (Tfb) and RNA polymerase recruitment. Not absolutely required for transcription in vitro, but particularly important in cases where Tbp or Tfb function is not optimal. It dynamically alters the nucleic acid-binding properties of RNA polymerases by stabilizing the initiation complex and destabilizing elongation complexes. Seems to translocate with the RNA polymerase following initiation and acts by binding to the non template strand of the transcription bubble in elongation complexes. The protein is Transcription factor E of Thermococcus kodakarensis (strain ATCC BAA-918 / JCM 12380 / KOD1) (Pyrococcus kodakaraensis (strain KOD1)).